The sequence spans 291 residues: Exosome complex exonuclease RRP42 (291 aa).

N-acetylalanine is present on alanine 2. Lysine 116 is subject to N6-acetyllysine.

It belongs to the RNase PH family. Component of the RNA exosome core complex (Exo-9), composed of EXOSC1, EXOSC2, EXOSC3, EXOSC4, EXOSC5, EXOSC6, EXOSC7, EXOSC8 and EXOSC9; within the complex interacts with EXOSC2 and EXOSC4. The catalytically inactive RNA exosome core complex (Exo-9) associates with the catalytic subunit EXOSC10/RRP6. Exo-9 may associate with DIS3 to form the nucleolar exosome complex, or DIS3L to form the cytoplasmic exosome complex. Exo-9 is formed by a hexameric base ring consisting of the heterodimers EXOSC4-EXOSC9, EXOSC5-EXOSC8 and EXOSC6-EXOSC7, and a cap ring consisting of EXOSC1, EXOSC2 and EXOSC3. The RNA exosome complex associates with cofactors C1D/RRP47, MPHOSPH6/MPP6 and MTREX/MTR4. Interacts with ZC3HAV1. Interacts with DIS3; the interaction is direct.

Its subcellular location is the nucleus. The protein localises to the nucleolus. The protein resides in the cytoplasm. Functionally, non-catalytic component of the RNA exosome complex which has 3'-&gt;5' exoribonuclease activity and participates in a multitude of cellular RNA processing and degradation events. In the nucleus, the RNA exosome complex is involved in proper maturation of stable RNA species such as rRNA, snRNA and snoRNA, in the elimination of RNA processing by-products and non-coding 'pervasive' transcripts, such as antisense RNA species and promoter-upstream transcripts (PROMPTs), and of mRNAs with processing defects, thereby limiting or excluding their export to the cytoplasm. The RNA exosome may be involved in Ig class switch recombination (CSR) and/or Ig variable region somatic hypermutation (SHM) by targeting AICDA deamination activity to transcribed dsDNA substrates. In the cytoplasm, the RNA exosome complex is involved in general mRNA turnover and specifically degrades inherently unstable mRNAs containing AU-rich elements (AREs) within their 3' untranslated regions, and in RNA surveillance pathways, preventing translation of aberrant mRNAs. It seems to be involved in degradation of histone mRNA. The catalytic inactive RNA exosome core complex of 9 subunits (Exo-9) is proposed to play a pivotal role in the binding and presentation of RNA for ribonucleolysis, and to serve as a scaffold for the association with catalytic subunits and accessory proteins or complexes. This Mus musculus (Mouse) protein is Exosome complex exonuclease RRP42 (Exosc7).